Here is a 292-residue protein sequence, read N- to C-terminus: 33 kDa chaperonin (292 aa).

2 cysteine pairs are disulfide-bonded: Cys230-Cys232 and Cys263-Cys266.

This sequence belongs to the HSP33 family. Post-translationally, under oxidizing conditions two disulfide bonds are formed involving the reactive cysteines. Under reducing conditions zinc is bound to the reactive cysteines and the protein is inactive.

Its subcellular location is the cytoplasm. Its function is as follows. Redox regulated molecular chaperone. Protects both thermally unfolding and oxidatively damaged proteins from irreversible aggregation. Plays an important role in the bacterial defense system toward oxidative stress. This chain is 33 kDa chaperonin, found in Enterobacter sp. (strain 638).